The chain runs to 670 residues: Transcriptional regulatory protein DOT6 (670 aa).

Positions 1–44 are enriched in polar residues; the sequence is MSISTSLNSASIHLSSMDTHPQLHSLTRQPHSSSTAMSKNEAQE. The interval 1 to 78 is disordered; that stretch reads MSISTSLNSA…SKNPSSWDPQ (78 aa). Positions 45 to 74 are enriched in low complexity; the sequence is SSPSLPASSSSSTSASASASSKNSSKNPSS. The region spanning 67-121 is the HTH myb-type domain; that stretch reads NSSKNPSSWDPQDDLLLRHLKEVKKMGWKDISQYFPNRTPNACQFRWRRLKSGNL. The segment at residues 94–117 is a DNA-binding region (H-T-H motif); sequence WKDISQYFPNRTPNACQFRWRRLK. Residues 226–242 show a composition bias toward basic residues; that stretch reads HHPHQHLHHHPHHKTLK. Disordered stretches follow at residues 226 to 250, 293 to 332, 406 to 436, and 483 to 659; these read HHPH…SHSF, TTPS…NTSR, HSSS…CNPT, and ADML…NSPL. Phosphoserine occurs at positions 245 and 247. Low complexity-rich tracts occupy residues 295 to 307 and 316 to 332; these read PSSP…LLSS and NWSR…NTSR. Over residues 425-436 the composition is skewed to polar residues; sequence SGHSMKSSCNPT. A Phosphoserine modification is found at Ser487. A Phosphothreonine modification is found at Thr489. Ser491 is modified (phosphoserine). Residues 512 to 522 are compositionally biased toward basic and acidic residues; the sequence is DDDKGSDKEDV. Low complexity-rich tracts occupy residues 544–561 and 587–598; these read SSNK…SSKD and TITSDTSSSAAT. Over residues 599-608 the composition is skewed to polar residues; the sequence is MNRTPNSKNP. Positions 622–659 are enriched in low complexity; sequence ITPRPKPSSTTTSITTETTNNMINHSSSTTTTTNNSPL.

The protein belongs to the DOT6 family. Component of the RPD3C(L) complex composed of at least ASH1, CTI6, DEP1, DOT6, PHO23, RPD3, RXT2, RXT3, SAP30, SDS3, SIN3, TOD6; UME1 and UME6.

The protein resides in the nucleus. Component of the RPD3 histone deacetylase complex RPD3C(L) responsible for the deacetylation of lysine residues on the N-terminal part of the core histones (H2A, H2B, H3 and H4). Histone deacetylation gives a tag for epigenetic repression and plays an important role in transcriptional regulation, cell cycle progression and developmental events. DOT6 binds to sequences containing the core CGATG, which resembles the PAC (Polymerase A and C) motif. The protein is Transcriptional regulatory protein DOT6 (DOT6) of Saccharomyces cerevisiae (strain ATCC 204508 / S288c) (Baker's yeast).